We begin with the raw amino-acid sequence, 759 residues long: Putative ATP-dependent DNA helicase YjcD (759 aa).

The tract at residues 68–121 (ACEPKPSKEGKKEDDQESGVIRLPKGKAIAADPSPAVTEWHRPRSIKPGTPFVP) is disordered. Over residues 69–81 (CEPKPSKEGKKED) the composition is skewed to basic and acidic residues. The region spanning 134 to 413 (VGLNTDQLKA…IYLTANYRST (280 aa)) is the UvrD-like helicase ATP-binding domain. ATP is bound by residues 158–163 (GSGKTR) and Arg411. The UvrD-like helicase C-terminal domain maps to 414-676 (HPIVSSADIV…QLMTIHRSKG (263 aa)).

The protein belongs to the helicase family. UvrD subfamily.

Its subcellular location is the cytoplasm. The catalysed reaction is Couples ATP hydrolysis with the unwinding of duplex DNA by translocating in the 3'-5' direction.. It catalyses the reaction ATP + H2O = ADP + phosphate + H(+). In terms of biological role, may be involved in the generation of recombinogenic substrates for the subsequent action of RecA. In Bacillus subtilis (strain 168), this protein is Putative ATP-dependent DNA helicase YjcD (yjcD).